Consider the following 487-residue polypeptide: Catalase (487 aa).

A disordered region spans residues 1-20; that stretch reads MSQRVLTTESGAPVADNQNS. Catalysis depends on residues His54 and Asn127. Tyr337 serves as a coordination point for heme.

This sequence belongs to the catalase family. Heme is required as a cofactor.

The enzyme catalyses 2 H2O2 = O2 + 2 H2O. In terms of biological role, decomposes hydrogen peroxide into water and oxygen; serves to protect cells from the toxic effects of hydrogen peroxide. This Streptomyces coelicolor (strain ATCC BAA-471 / A3(2) / M145) protein is Catalase (katA).